We begin with the raw amino-acid sequence, 709 residues long: MAAGVDFGDLELFEAFDPPEESTPKPVHTRFKDDEEEEDDDDDENGVGDAELQEQLRRCEATIEQLRAENQELKRKLNILTRPSGILVSNTKIDGPLLQILFMNNAISKQYHQEIEEFVSNLVKRFEEQQKNDVEKTSFSLLPQPSSVMLEEDHKVEESCAVKNNKEAFSVVGSVLYFTNFCLDKLGQPLLNENPQLTEGWEIPKYQQVFSHIVPLEGQEMQVKAKRPKPHCFNCGSEEHQMKECPMPRNAARISEKRKEYMDACGEASGQSFQQRYHAEEVEERFGRFKPGVISEELQDALGVTDKSLPPFIYRMRQLGYPPGWLKEAELENSGLALYDGNDDADGETETGEIQNKNVTYDLSKLVNYPGFNISTPRGIPDEWRMFGSIPMQACQQKDVFASYLNSNIQSPSMRSSGKRSSSQSSPNSPKKQRKEGSAAASPADMELDSDVEIPPGSQSSKAFQFQPPLPPGTPPPLPQGTPPPLFTPPLPKGTPPLTPSDSPQARPAASAMDEDALTLEELEEQQRQIWAALQQAEGGNGDSDVPGDTPLTGNSVASSPCPNEFDLPVPEGKALEKPVLAEPQEPAASVDTAGPEPSCSPAAGAAVLSQREEEAAAEGGPGDALLDNGGVLNMNMSNGSNQQPIHPDSRPPMAPKTHSPVPDMSKFATGITPFEFENMAESTGMYLRIRNLLKNSPRNQQKNKKTCE.

The interval 1 to 47 (MAAGVDFGDLELFEAFDPPEESTPKPVHTRFKDDEEEEDDDDDENGV) is disordered. The residue at position 2 (alanine 2) is an N-acetylalanine. Acidic residues-rich tracts occupy residues 8-20 (GDLE…DPPE) and 34-46 (DEEE…DENG). Residues 48-83 (GDAELQEQLRRCEATIEQLRAENQELKRKLNILTRP) adopt a coiled-coil conformation. A CCHC-type zinc finger spans residues 230–247 (PHCFNCGSEEHQMKECPM). RBM7 binding stretches follow at residues 289-302 (FKPG…QDAL) and 312-327 (FIYR…GWLK). Disordered stretches follow at residues 409–518 (IQSP…EDAL) and 533–667 (ALQQ…DMSK). The span at 410 to 430 (QSPSMRSSGKRSSSQSSPNSP) shows a compositional bias: low complexity. Residues 468–499 (PPLPPGTPPPLPQGTPPPLFTPPLPKGTPPLT) show a composition bias toward pro residues. Residues threonine 474, threonine 482, threonine 488, and threonine 495 each carry the phosphothreonine modification. The span at 552 to 562 (LTGNSVASSPC) shows a compositional bias: polar residues. Serine 601 bears the Phosphoserine mark. Positions 635-645 (MNMSNGSNQQP) are enriched in polar residues. Phosphoserine is present on residues serine 660 and serine 697. An MTREX binding region spans residues 661 to 709 (PVPDMSKFATGITPFEFENMAESTGMYLRIRNLLKNSPRNQQKNKKTCE).

Belongs to the ZCCHC8 family. In terms of assembly, component of a nuclear TRAMP-like complex, an ATP-dependent exosome regulatory complex consisting of a helicase (MTREX), an oligadenylate polymerase (TENT4B or TENT4A), and a substrate specific RNA-binding factor (ZCCHC7 or ZCCHC8). Several TRAMP-like complexes exist with specific compositions and are associated with nuclear, or nucleolar RNA exosomes. Identified in the spliceosome C complex. Component of the nuclear exosome targeting (NEXT) complex composed of MTREX, ZCCHC8, and RBM7 that directs a subset of non-coding short-lived RNAs for exosomal degradation. Interacts with proteins involved in RNA processing and degradation such as MTREX and RBM7; interaction with MTREX enhances MTREX RNA helicase activity and bridges between RBM7 and MTREX. Interacts with TERC, the telomerase RNA component. In terms of processing, phosphorylation at Thr-495 by GSK3 is triggered in cells entering mitosis.

The protein resides in the nucleus. The protein localises to the nucleoplasm. Functionally, scaffolding subunit of the trimeric nuclear exosome targeting (NEXT) complex that is involved in the surveillance and turnover of aberrant transcripts and non-coding RNAs. NEXT functions as an RNA exosome cofactor that directs a subset of non-coding short-lived RNAs for exosomal degradation. May be involved in pre-mRNA splicing. It is required for 3'-end maturation of telomerase RNA component (TERC), TERC 3'-end targeting to the nuclear RNA exosome, and for telomerase function. This Mus musculus (Mouse) protein is Zinc finger CCHC domain-containing protein 8 (Zcchc8).